The following is a 149-amino-acid chain: Transcription antitermination protein NusB (149 aa).

Belongs to the NusB family.

In terms of biological role, involved in transcription antitermination. Required for transcription of ribosomal RNA (rRNA) genes. Binds specifically to the boxA antiterminator sequence of the ribosomal RNA (rrn) operons. This Acinetobacter baumannii (strain AB307-0294) protein is Transcription antitermination protein NusB.